We begin with the raw amino-acid sequence, 431 residues long: Tyrosine--tRNA ligase (431 aa).

L-tyrosine is bound at residue Tyr-33. A 'HIGH' region motif is present at residues Pro-38 to Ser-47. The L-tyrosine site is built by Tyr-172 and Gln-176. A 'KMSKS' region motif is present at residues Lys-234–Ser-238. Lys-237 contacts ATP. The S4 RNA-binding domain maps to Ile-364 to Lys-431.

The protein belongs to the class-I aminoacyl-tRNA synthetase family. TyrS type 1 subfamily. In terms of assembly, homodimer.

The protein resides in the cytoplasm. The enzyme catalyses tRNA(Tyr) + L-tyrosine + ATP = L-tyrosyl-tRNA(Tyr) + AMP + diphosphate + H(+). Catalyzes the attachment of tyrosine to tRNA(Tyr) in a two-step reaction: tyrosine is first activated by ATP to form Tyr-AMP and then transferred to the acceptor end of tRNA(Tyr). This is Tyrosine--tRNA ligase from Flavobacterium psychrophilum (strain ATCC 49511 / DSM 21280 / CIP 103535 / JIP02/86).